Here is a 474-residue protein sequence, read N- to C-terminus: P2X purinoceptor 2 (474 aa).

Topologically, residues 1–42 (MAATHPKAPTAQRLRQGWSAFWDYETPKVIVVRNRPLGVVYR) are cytoplasmic. Residues 43–60 (AVQLLILLYFVWYVFIVQ) traverse the membrane as a helical segment. Residues 61 to 333 (KSYQDSETGP…IVHGQAGKFS (273 aa)) lie on the Extracellular side of the membrane. Lysine 77 and lysine 79 together coordinate ATP. 3 cysteine pairs are disulfide-bonded: cysteine 121/cysteine 172, cysteine 132/cysteine 155, and cysteine 138/cysteine 166. N-linked (GlcNAc...) asparagine glycosylation is present at asparagine 129. N-linked (GlcNAc...) asparagine glycosylation occurs at asparagine 190. Threonine 192 provides a ligand contact to ATP. An intrachain disulfide couples cysteine 222 to cysteine 232. The N-linked (GlcNAc...) asparagine glycan is linked to asparagine 247. An intrachain disulfide couples cysteine 266 to cysteine 275. Serine 292, asparagine 296, and arginine 298 together coordinate ATP. The N-linked (GlcNAc...) asparagine glycan is linked to asparagine 306. An ATP-binding site is contributed by lysine 315. The pore-forming motif stretch occupies residues 316 to 329 (AYGIRIDVIVHGQA). Residues 334 to 354 (LIPTIINLATALTSIGVGSFL) traverse the membrane as a helical segment. The Cytoplasmic portion of the chain corresponds to 355-474 (CDWILLTFMN…PTDPKGLAQL (120 aa)). A disordered region spans residues 445–474 (PDRCVGQGLPSSESPLQDSTPTDPKGLAQL). The segment covering 453 to 466 (LPSSESPLQDSTPT) has biased composition (polar residues).

Belongs to the P2X receptor family. Homotrimer and heterotrimer; functional P2XRs are organized as homomeric and heteromeric trimers. Homotrimer. Forms heterodimer with P2RX1. Forms heterotrimer with P2RX6. Forms heterotrimer with P2RX3. As to expression, express in organ of Corti.

It is found in the cell membrane. The enzyme catalyses Ca(2+)(in) = Ca(2+)(out). It carries out the reaction K(+)(in) = K(+)(out). The catalysed reaction is Na(+)(in) = Na(+)(out). With respect to regulation, fast activation by external ATP. Exhibits slow desensitization during prolonged ATP activation. Not sensitive to the ATP agonist:alpha/beta-methylene-ATP. In terms of biological role, ATP-gated nonselective transmembrane cation channel permeable to potassium, sodium and calcium. Activation by extracellular ATP induces a variety of cellular responses, such as excitatory postsynaptic responses in sensory neurons, neuromuscular junctions (NMJ) formation, hearing, perception of taste and peristalsis. In the inner ear, regulates sound transduction and auditory neurotransmission, outer hair cell electromotility, inner ear gap junctions, and K(+) recycling. Mediates synaptic transmission between neurons and from neurons to smooth muscle. In Cavia porcellus (Guinea pig), this protein is P2X purinoceptor 2 (P2RX2).